Consider the following 113-residue polypeptide: Large ribosomal subunit protein bL19 (113 aa).

The protein belongs to the bacterial ribosomal protein bL19 family.

This protein is located at the 30S-50S ribosomal subunit interface and may play a role in the structure and function of the aminoacyl-tRNA binding site. The chain is Large ribosomal subunit protein bL19 from Rhodococcus jostii (strain RHA1).